A 548-amino-acid chain; its full sequence is ETS domain-containing transcription factor ERF (548 aa).

Residues Thr-3 and Thr-7 each carry the phosphothreonine modification. 2 positions are modified to phosphoserine: Ser-20 and Ser-24. The segment at residues 27–107 (IQLWHFILEL…KGKRFTYKFN (81 aa)) is a DNA-binding region (ETS). 3 disordered regions span residues 130-169 (QSAP…SSSS), 184-225 (GSVS…LARL), and 280-304 (SPTL…SHFS). Ser-185 and Ser-190 each carry phosphoserine. The segment covering 289–301 (SGGGGPSGSGGGS) has biased composition (gly residues). Residue Ser-327 is modified to Phosphoserine. The segment at 342-478 (PQRPDKCPLP…GEAPGASQCM (137 aa)) is disordered. Residues 348 to 361 (CPLPPMAPETPPVP) show a composition bias toward pro residues. Low complexity-rich tracts occupy residues 362-373 (SSASSSSSSSSS) and 394-403 (KAVAGADKSG). A phosphoserine mark is found at Ser-431 and Ser-435. The segment covering 431-451 (SEGESEEVEVTDISDEDEEDG) has biased composition (acidic residues). Thr-441 bears the Phosphothreonine mark. Position 444 is a phosphoserine (Ser-444). Residues Lys-465, Lys-481, and Lys-512 each participate in a glycyl lysine isopeptide (Lys-Gly) (interchain with G-Cter in SUMO2) cross-link. A disordered region spans residues 492 to 548 (CRLEGGGGPAGGFEDEGEDKKVRGEGPGEAGGPLTPRRVSSDLQHATAQLSLEHRDS). A Phosphothreonine; by MAPK1 modification is found at Thr-526. Phosphoserine occurs at positions 531, 532, and 548. Polar residues predominate over residues 532–541 (SDLQHATAQL).

It belongs to the ETS family. Post-translationally, phosphorylated by multiple kinases including MAPK1/ERK2 at THR-526. Phosphorylation regulates the activity of ERF. Highest levels in testis, ovary, pancreas, and heart.

It is found in the nucleus. Functionally, potent transcriptional repressor that binds to the H1 element of the Ets2 promoter. May regulate other genes involved in cellular proliferation. Required for extraembryonic ectoderm differentiation, ectoplacental cone cavity closure, and chorioallantoic attachment. May be important for regulating trophoblast stem cell differentiation. The sequence is that of ETS domain-containing transcription factor ERF (ERF) from Homo sapiens (Human).